The sequence spans 632 residues: 1-deoxy-D-xylulose-5-phosphate synthase (632 aa).

Residues His73 and 114-116 (SHA) each bind thiamine diphosphate. Asp146 lines the Mg(2+) pocket. Thiamine diphosphate contacts are provided by residues 147–148 (GA), Asn176, Tyr287, and Glu368. Asn176 is a binding site for Mg(2+).

The protein belongs to the transketolase family. DXPS subfamily. As to quaternary structure, homodimer. Mg(2+) serves as cofactor. The cofactor is thiamine diphosphate.

It catalyses the reaction D-glyceraldehyde 3-phosphate + pyruvate + H(+) = 1-deoxy-D-xylulose 5-phosphate + CO2. The protein operates within metabolic intermediate biosynthesis; 1-deoxy-D-xylulose 5-phosphate biosynthesis; 1-deoxy-D-xylulose 5-phosphate from D-glyceraldehyde 3-phosphate and pyruvate: step 1/1. Catalyzes the acyloin condensation reaction between C atoms 2 and 3 of pyruvate and glyceraldehyde 3-phosphate to yield 1-deoxy-D-xylulose-5-phosphate (DXP). The polypeptide is 1-deoxy-D-xylulose-5-phosphate synthase (Corynebacterium glutamicum (strain R)).